Reading from the N-terminus, the 1295-residue chain is DNA-directed RNA polymerase subunit beta' (1295 aa).

4 residues coordinate Zn(2+): Cys60, Cys62, Cys75, and Cys78. Positions 516, 518, and 520 each coordinate Mg(2+). Residues Cys841, Cys914, Cys921, and Cys924 each contribute to the Zn(2+) site.

Belongs to the RNA polymerase beta' chain family. As to quaternary structure, the RNAP catalytic core consists of 2 alpha, 1 beta, 1 beta' and 1 omega subunit. When a sigma factor is associated with the core the holoenzyme is formed, which can initiate transcription. Mg(2+) is required as a cofactor. It depends on Zn(2+) as a cofactor.

The enzyme catalyses RNA(n) + a ribonucleoside 5'-triphosphate = RNA(n+1) + diphosphate. DNA-dependent RNA polymerase catalyzes the transcription of DNA into RNA using the four ribonucleoside triphosphates as substrates. The chain is DNA-directed RNA polymerase subunit beta' from Dehalococcoides mccartyi (strain CBDB1).